Consider the following 432-residue polypeptide: Enolase (432 aa).

Glutamine 163 lines the (2R)-2-phosphoglycerate pocket. The active-site Proton donor is glutamate 205. Aspartate 242, glutamate 285, and aspartate 312 together coordinate Mg(2+). (2R)-2-phosphoglycerate-binding residues include lysine 337, arginine 366, serine 367, and lysine 388. The active-site Proton acceptor is the lysine 337.

The protein belongs to the enolase family. Mg(2+) is required as a cofactor.

It localises to the cytoplasm. The protein resides in the secreted. It is found in the cell surface. The catalysed reaction is (2R)-2-phosphoglycerate = phosphoenolpyruvate + H2O. Its pathway is carbohydrate degradation; glycolysis; pyruvate from D-glyceraldehyde 3-phosphate: step 4/5. In terms of biological role, catalyzes the reversible conversion of 2-phosphoglycerate (2-PG) into phosphoenolpyruvate (PEP). It is essential for the degradation of carbohydrates via glycolysis. The polypeptide is Enolase (Bifidobacterium longum (strain DJO10A)).